The following is an 89-amino-acid chain: Elongation factor 1-beta (89 aa).

It belongs to the EF-1-beta/EF-1-delta family.

Functionally, promotes the exchange of GDP for GTP in EF-1-alpha/GDP, thus allowing the regeneration of EF-1-alpha/GTP that could then be used to form the ternary complex EF-1-alpha/GTP/AAtRNA. This chain is Elongation factor 1-beta, found in Methanobrevibacter smithii (strain ATCC 35061 / DSM 861 / OCM 144 / PS).